The sequence spans 191 residues: UPF0312 protein Shew185_3055 (191 aa).

The N-terminal stretch at 1–22 (MKKQLLSALIGASLLAPMAASA) is a signal peptide.

Belongs to the UPF0312 family. Type 1 subfamily.

The protein localises to the periplasm. In Shewanella baltica (strain OS185), this protein is UPF0312 protein Shew185_3055.